Reading from the N-terminus, the 394-residue chain is Putative gustatory receptor 22a (394 aa).

Topologically, residues 1 to 16 (MSQPKRIHRICKGLAR) are cytoplasmic. A helical transmembrane segment spans residues 17 to 37 (FTIRATLYGSWVLGLFPFTFD). The Extracellular segment spans residues 38-47 (SRKRRLNRSK). N-linked (GlcNAc...) asparagine glycosylation occurs at asparagine 44. A helical transmembrane segment spans residues 48 to 68 (WLLAYGLVLNLTLLVLSMLPS). Residues 69 to 148 (TDDHNSVKVE…HTFNRYVIEK (80 aa)) are Cytoplasmic-facing. Residues 149 to 169 (GLVIILEIGSSLVLYFGIPNS) form a helical membrane-spanning segment. Residue lysine 170 is a topological domain, extracellular. Residues 171–191 (IVVYEAVCIYIVQLEVLMVVM) traverse the membrane as a helical segment. Residues 192–256 (HFHLAVIYIY…TAIYDIQVTL (65 aa)) lie on the Cytoplasmic side of the membrane. The chain crosses the membrane as a helical span at residues 257-277 (FMATLFSVNIIVGHVLVICWI). The N-linked (GlcNAc...) asparagine glycan is linked to asparagine 278. Topologically, residues 278-281 (NITR) are extracellular. A helical membrane pass occupies residues 282-302 (FSLLVIFLLFPQALIINFWDL). Residues 303–361 (WQGIAFCDLAESTGKKTSMILKLFNDMENMDQETERRVTEFTLFCSHRRLKVCHLGLLD) lie on the Cytoplasmic side of the membrane. The chain crosses the membrane as a helical span at residues 362-382 (INYEMGFRMIITNILYVVFLV). The Extracellular segment spans residues 383–394 (QFDYMNLKFKTD).

It belongs to the insect chemoreceptor superfamily. Gustatory receptor (GR) family. Gr22e subfamily. As to expression, expressed in neurons of the terminal external chemosensory organ of larvae.

It is found in the cell membrane. Functionally, probable gustatory receptor which mediates acceptance or avoidance behavior, depending on its substrates. The protein is Putative gustatory receptor 22a (Gr22a) of Drosophila melanogaster (Fruit fly).